We begin with the raw amino-acid sequence, 665 residues long: Methionine--tRNA ligase (665 aa).

Positions 12–22 (YYPSGKLHIGS) match the 'HIGH' region motif. A 'KMSKS' region motif is present at residues 308-312 (KMSKS). Lys311 contributes to the ATP binding site. Residues 562–665 (TFDAVEIRVA…SSVPNGSIIG (104 aa)) enclose the tRNA-binding domain.

It belongs to the class-I aminoacyl-tRNA synthetase family. MetG type 2B subfamily. As to quaternary structure, homodimer.

Its subcellular location is the cytoplasm. The catalysed reaction is tRNA(Met) + L-methionine + ATP = L-methionyl-tRNA(Met) + AMP + diphosphate. Is required not only for elongation of protein synthesis but also for the initiation of all mRNA translation through initiator tRNA(fMet) aminoacylation. The protein is Methionine--tRNA ligase (metG) of Streptococcus pyogenes serotype M1.